The chain runs to 80 residues: Small ribosomal subunit protein bS18 (80 aa).

Belongs to the bacterial ribosomal protein bS18 family. As to quaternary structure, part of the 30S ribosomal subunit. Forms a tight heterodimer with protein bS6.

Its function is as follows. Binds as a heterodimer with protein bS6 to the central domain of the 16S rRNA, where it helps stabilize the platform of the 30S subunit. In Staphylococcus epidermidis (strain ATCC 35984 / DSM 28319 / BCRC 17069 / CCUG 31568 / BM 3577 / RP62A), this protein is Small ribosomal subunit protein bS18.